Consider the following 1026-residue polypeptide: Probable DNA-directed RNA polymerase II subunit RPB1 homolog (1026 aa).

Residues Cys-62, Cys-65, Cys-72, His-75, Cys-102, Cys-105, and Cys-142 each contribute to the Zn(2+) site. The Mg(2+) site is built by Asp-588, Asp-590, and Asp-592.

This sequence belongs to the RNA polymerase beta' chain family.

It carries out the reaction RNA(n) + a ribonucleoside 5'-triphosphate = RNA(n+1) + diphosphate. In terms of biological role, component of the DNA-dependent RNA polymerase that catalyzes the transcription of DNA into RNA using the four ribonucleoside triphosphates as substrates. Largest and catalytic component of RNA polymerase II which synthesizes mRNA precursors and many functional non-coding RNAs. Forms the polymerase active center together with the second largest subunit. The polypeptide is Probable DNA-directed RNA polymerase II subunit RPB1 homolog (Acheta domesticus (House cricket)).